We begin with the raw amino-acid sequence, 259 residues long: NH(3)-dependent NAD(+) synthetase (259 aa).

33–40 (GLSGGIDS) contacts ATP. Residue Asp39 participates in Mg(2+) binding. Arg119 provides a ligand contact to deamido-NAD(+). Thr139 is a binding site for ATP. A Mg(2+)-binding site is contributed by Glu144. Residues Lys152 and Asp159 each coordinate deamido-NAD(+). Lys168 and Ser190 together coordinate ATP. 249–250 (HK) lines the deamido-NAD(+) pocket.

Belongs to the NAD synthetase family. As to quaternary structure, homodimer.

The enzyme catalyses deamido-NAD(+) + NH4(+) + ATP = AMP + diphosphate + NAD(+) + H(+). It functions in the pathway cofactor biosynthesis; NAD(+) biosynthesis; NAD(+) from deamido-NAD(+) (ammonia route): step 1/1. In terms of biological role, catalyzes the ATP-dependent amidation of deamido-NAD to form NAD. Uses ammonia as a nitrogen source. This is NH(3)-dependent NAD(+) synthetase from Methanocaldococcus jannaschii (strain ATCC 43067 / DSM 2661 / JAL-1 / JCM 10045 / NBRC 100440) (Methanococcus jannaschii).